Consider the following 157-residue polypeptide: Endoribonuclease YbeY (157 aa).

The Zn(2+) site is built by histidine 111, histidine 115, and histidine 121.

Belongs to the endoribonuclease YbeY family. Zn(2+) serves as cofactor.

It is found in the cytoplasm. Single strand-specific metallo-endoribonuclease involved in late-stage 70S ribosome quality control and in maturation of the 3' terminus of the 16S rRNA. The polypeptide is Endoribonuclease YbeY (Pseudomonas putida (strain ATCC 47054 / DSM 6125 / CFBP 8728 / NCIMB 11950 / KT2440)).